The chain runs to 545 residues: CTP synthase (545 aa).

An amidoligase domain region spans residues 1–266; it reads MKTNYIFVTG…DDYICKRFSL (266 aa). Ser14 is a binding site for CTP. Residue Ser14 participates in UTP binding. ATP is bound by residues 15-20 and Asp72; that span reads SLGKGI. 2 residues coordinate Mg(2+): Asp72 and Glu140. CTP is bound by residues 147–149, 187–192, and Lys223; these read DIE and KTKPTQ. Residues 187–192 and Lys223 contribute to the UTP site; that span reads KTKPTQ. 239–241 is an ATP binding site; sequence KDV. The Glutamine amidotransferase type-1 domain maps to 291–542; that stretch reads TIGMVGKYVE…VKAAGKYQKG (252 aa). Gly352 contacts L-glutamine. Cys379 (nucleophile; for glutamine hydrolysis) is an active-site residue. L-glutamine-binding positions include 380 to 383, Glu403, and Arg470; that span reads LGMQ. Residues His515 and Glu517 contribute to the active site.

It belongs to the CTP synthase family. In terms of assembly, homotetramer.

The catalysed reaction is UTP + L-glutamine + ATP + H2O = CTP + L-glutamate + ADP + phosphate + 2 H(+). The enzyme catalyses L-glutamine + H2O = L-glutamate + NH4(+). It catalyses the reaction UTP + NH4(+) + ATP = CTP + ADP + phosphate + 2 H(+). It functions in the pathway pyrimidine metabolism; CTP biosynthesis via de novo pathway; CTP from UDP: step 2/2. Allosterically activated by GTP, when glutamine is the substrate; GTP has no effect on the reaction when ammonia is the substrate. The allosteric effector GTP functions by stabilizing the protein conformation that binds the tetrahedral intermediate(s) formed during glutamine hydrolysis. Inhibited by the product CTP, via allosteric rather than competitive inhibition. In terms of biological role, catalyzes the ATP-dependent amination of UTP to CTP with either L-glutamine or ammonia as the source of nitrogen. Regulates intracellular CTP levels through interactions with the four ribonucleotide triphosphates. The sequence is that of CTP synthase from Photorhabdus laumondii subsp. laumondii (strain DSM 15139 / CIP 105565 / TT01) (Photorhabdus luminescens subsp. laumondii).